The following is a 520-amino-acid chain: Maturase K (520 aa).

It belongs to the intron maturase 2 family. MatK subfamily.

The protein localises to the plastid. It localises to the chloroplast. Its function is as follows. Usually encoded in the trnK tRNA gene intron. Probably assists in splicing its own and other chloroplast group II introns. The protein is Maturase K of Beaucarnea recurvata (Elephant-foot tree).